We begin with the raw amino-acid sequence, 64 residues long: Conotoxin Ts-011 (64 aa).

The first 22 residues, 1–22 (MHCLPVPVILLLLIASTPSVDA), serve as a signal peptide directing secretion. The propeptide occupies 23–51 (RPKTKDDVPPASFHGADNANRILRTLWNL). Isoleucine amide is present on isoleucine 63.

It belongs to the conotoxin T superfamily. Contains 2 disulfide bonds that can be either 'C1-C3, C2-C4' or 'C1-C4, C2-C3', since these disulfide connectivities have been observed for conotoxins with cysteine framework V (for examples, see AC P0DQQ7 and AC P81755). As to expression, expressed by the venom duct.

The protein resides in the secreted. In Conus tessulatus (Tessellate cone), this protein is Conotoxin Ts-011.